The chain runs to 363 residues: Chorismate synthase (363 aa).

R47 serves as a coordination point for NADP(+). FMN is bound by residues 124 to 126 (RAS), G286, 301 to 305 (KPTAT), and R327.

Belongs to the chorismate synthase family. As to quaternary structure, homotetramer. The cofactor is FMNH2.

The enzyme catalyses 5-O-(1-carboxyvinyl)-3-phosphoshikimate = chorismate + phosphate. The protein operates within metabolic intermediate biosynthesis; chorismate biosynthesis; chorismate from D-erythrose 4-phosphate and phosphoenolpyruvate: step 7/7. Its function is as follows. Catalyzes the anti-1,4-elimination of the C-3 phosphate and the C-6 proR hydrogen from 5-enolpyruvylshikimate-3-phosphate (EPSP) to yield chorismate, which is the branch point compound that serves as the starting substrate for the three terminal pathways of aromatic amino acid biosynthesis. This reaction introduces a second double bond into the aromatic ring system. The polypeptide is Chorismate synthase (Prochlorococcus marinus (strain MIT 9211)).